The sequence spans 426 residues: uncharacterized protein (426 aa).

It belongs to the serpin family.

This is an uncharacterized protein from Methanosarcina mazei (strain ATCC BAA-159 / DSM 3647 / Goe1 / Go1 / JCM 11833 / OCM 88) (Methanosarcina frisia).